The sequence spans 196 residues: Thymidine kinase (196 aa).

Residues 9–16 (SAMNAGKS) and 88–91 (DEAQ) contribute to the ATP site. Catalysis depends on Glu-89, which acts as the Proton acceptor. Cys-146, Cys-148, Cys-183, and His-186 together coordinate Zn(2+).

This sequence belongs to the thymidine kinase family. Homotetramer.

The protein resides in the cytoplasm. It carries out the reaction thymidine + ATP = dTMP + ADP + H(+). This is Thymidine kinase from Coxiella burnetii (strain RSA 493 / Nine Mile phase I).